The primary structure comprises 351 residues: Photosystem II D2 protein (351 aa).

A helical transmembrane segment spans residues 39–59 (CAYLAVGGWLTGTTFVTSWYT). Histidine 116 contributes to the chlorophyll a binding site. A helical membrane pass occupies residues 123–139 (GFCLRQFEIARLVGLRP). Pheophytin a contacts are provided by glutamine 128 and asparagine 141. A helical transmembrane segment spans residues 151 to 164 (VFVSVFLMYPLGQA). Residue histidine 196 participates in chlorophyll a binding. Residues 206 to 226 (GALLCAIHGATVQNTLFEDGD) traverse the membrane as a helical segment. Histidine 213 and phenylalanine 260 together coordinate a plastoquinone. Histidine 213 serves as a coordination point for Fe cation. Histidine 267 serves as a coordination point for Fe cation. The helical transmembrane segment at 277 to 293 (GLWTSAFGIVGLALNLR) threads the bilayer.

It belongs to the reaction center PufL/M/PsbA/D family. PSII is composed of 1 copy each of membrane proteins PsbA, PsbB, PsbC, PsbD, PsbE, PsbF, PsbH, PsbI, PsbJ, PsbK, PsbL, PsbM, PsbT, PsbX, PsbY, PsbZ, Psb30/Ycf12, at least 3 peripheral proteins of the oxygen-evolving complex and a large number of cofactors. It forms dimeric complexes. The cofactor is The D1/D2 heterodimer binds P680, chlorophylls that are the primary electron donor of PSII, and subsequent electron acceptors. It shares a non-heme iron and each subunit binds pheophytin, quinone, additional chlorophylls, carotenoids and lipids. There is also a Cl(-1) ion associated with D1 and D2, which is required for oxygen evolution. The PSII complex binds additional chlorophylls, carotenoids and specific lipids..

It localises to the plastid. The protein localises to the chloroplast thylakoid membrane. The enzyme catalyses 2 a plastoquinone + 4 hnu + 2 H2O = 2 a plastoquinol + O2. In terms of biological role, photosystem II (PSII) is a light-driven water:plastoquinone oxidoreductase that uses light energy to abstract electrons from H(2)O, generating O(2) and a proton gradient subsequently used for ATP formation. It consists of a core antenna complex that captures photons, and an electron transfer chain that converts photonic excitation into a charge separation. The D1/D2 (PsbA/PsbD) reaction center heterodimer binds P680, the primary electron donor of PSII as well as several subsequent electron acceptors. D2 is needed for assembly of a stable PSII complex. The sequence is that of Photosystem II D2 protein from Pyropia yezoensis (Susabi-nori).